Reading from the N-terminus, the 76-residue chain is Adropin (76 aa).

Positions 1 to 33 (MGAAISQGALIAIVCNGLVGFLLLLLWVILCWA) are cleaved as a signal peptide. Positions 41 to 76 (VDSLSESSPNSSPGPCPEKAPPPQKPSHEGSYLLQP) are disordered. A compositionally biased stretch (pro residues) spans 52–65 (SPGPCPEKAPPPQK).

In terms of tissue distribution, expressed in liver and brain.

The protein localises to the secreted. Involved in the regulation of glucose homeostasis and lipid metabolism. This is Adropin (ENHO) from Homo sapiens (Human).